The primary structure comprises 440 residues: Lysine histidine transporter-like 6 (440 aa).

Over residues 1-10 (MVSSSPVSPS) the composition is skewed to polar residues. The segment at 1-25 (MVSSSPVSPSKETDRKSGEKWTAED) is disordered. The Cytoplasmic portion of the chain corresponds to 1 to 31 (MVSSSPVSPSKETDRKSGEKWTAEDPSRPAK). The span at 11–25 (KETDRKSGEKWTAED) shows a compositional bias: basic and acidic residues. A helical transmembrane segment spans residues 32 to 51 (WWYSTFHTVTAMIGAGVLSL). The Extracellular segment spans residues 52–61 (PYAMAYLGWG). The chain crosses the membrane as a helical span at residues 62–82 (PGTFVLAMTWGLTLNTMWQMV). Topologically, residues 83 to 109 (QLHECVPGTRFDRYIDLGRYAFGPKLG) are cytoplasmic. The helical transmembrane segment at 110 to 130 (PWIVLPQQLIVQVGCNIVYMV) threads the bilayer. Topologically, residues 131–152 (TGGKCLKQFVEITCSTCTPVRQ) are extracellular. A helical transmembrane segment spans residues 153–173 (SYWILGFGGVHFILSQLPNFN). A topological domain (cytoplasmic) is located at residue Ser-174. Residues 175 to 195 (VAGVSLAAAVMSLCYSTIAWG) form a helical membrane-spanning segment. At 196–221 (GSIAHGRVPDVSYDYKATNPGDFTFR) the chain is on the extracellular side. The helical transmembrane segment at 222-242 (VFNALGQISFAFAGHAVALEI) threads the bilayer. Residues 243 to 261 (QATMPSTPERPSKVPMWQG) lie on the Cytoplasmic side of the membrane. The helical transmembrane segment at 262 to 282 (VIGAYVVNAVCYFPVALICYW) threads the bilayer. Over 283-300 (AFGQDVDDNVLMNLQRPA) the chain is Extracellular. Residues 301–321 (WLIAAANLMVVVHVIGSYQVF) form a helical membrane-spanning segment. Topologically, residues 322–353 (AMPVFDLLERMMVNKFGFKHGVVLRFFTRTIY) are cytoplasmic. Helical transmembrane passes span 354–374 (VAFT…LGFF) and 375–395 (GGFG…LIIK). Over 396–399 (KPRR) the chain is Cytoplasmic. Residues 400 to 420 (FSVTWFVNWISIIVGVFIMLA) traverse the membrane as a helical segment. Topologically, residues 421–440 (STIGGLRNIIADSSTYSFYA) are extracellular.

The protein belongs to the amino acid/polyamine transporter 2 family. Amino acid/auxin permease (AAAP) (TC 2.A.18.2) subfamily.

Its subcellular location is the cell membrane. Functionally, amino acid transporter. The sequence is that of Lysine histidine transporter-like 6 from Arabidopsis thaliana (Mouse-ear cress).